The sequence spans 134 residues: ATP synthase epsilon chain, chloroplastic (134 aa).

This sequence belongs to the ATPase epsilon chain family. In terms of assembly, F-type ATPases have 2 components, CF(1) - the catalytic core - and CF(0) - the membrane proton channel. CF(1) has five subunits: alpha(3), beta(3), gamma(1), delta(1), epsilon(1). CF(0) has three main subunits: a, b and c.

Its subcellular location is the plastid. The protein localises to the chloroplast thylakoid membrane. Functionally, produces ATP from ADP in the presence of a proton gradient across the membrane. This chain is ATP synthase epsilon chain, chloroplastic, found in Nymphaea alba (White water-lily).